Reading from the N-terminus, the 108-residue chain is MSKAVLRFIRLSPTKARLIAREVQGMNAEEALAALEFMPNKAAKVISKVITSAVANGGYEPEEVVITSCRVDRGPYLKRFRPRARGRASRIMKPTSHVYVEVAQKKDS.

The protein belongs to the universal ribosomal protein uL22 family. As to quaternary structure, part of the 50S ribosomal subunit.

In terms of biological role, this protein binds specifically to 23S rRNA; its binding is stimulated by other ribosomal proteins, e.g. L4, L17, and L20. It is important during the early stages of 50S assembly. It makes multiple contacts with different domains of the 23S rRNA in the assembled 50S subunit and ribosome. Functionally, the globular domain of the protein is located near the polypeptide exit tunnel on the outside of the subunit, while an extended beta-hairpin is found that lines the wall of the exit tunnel in the center of the 70S ribosome. This Nitratiruptor sp. (strain SB155-2) protein is Large ribosomal subunit protein uL22.